Reading from the N-terminus, the 274-residue chain is MLTVETRQAVNPDYAKTLDTEGLRRHFLANDMFRSGEIRLIYTHYDRFVMGGAVPNGAPLTLDKVEETKTPSFLDRREMGIVNIGETGTVSAGDETYTLNRGDVLYLGAGSRAVTFDGAGRFYITSCPAHRSLPAKLVSLADSKEVKLGATETSNKRTINQFIHPLVMESCQLVLGYTMLEDGSVWNTIPSHIHDRRMEAYLYFGMDEKSRVLHLMGEPQETRHLFISNEEGAISPPWSIHSGAGIGSYTFIWAMAGDNVDYTDMDFIQPGDLK.

Positions 192, 194, 199, and 241 each coordinate Zn(2+).

Belongs to the KduI family. Requires Zn(2+) as cofactor.

It catalyses the reaction 5-dehydro-4-deoxy-D-glucuronate = 3-deoxy-D-glycero-2,5-hexodiulosonate. It participates in glycan metabolism; pectin degradation; 2-dehydro-3-deoxy-D-gluconate from pectin: step 4/5. Its function is as follows. Catalyzes the isomerization of 5-dehydro-4-deoxy-D-glucuronate to 3-deoxy-D-glycero-2,5-hexodiulosonate. This is 4-deoxy-L-threo-5-hexosulose-uronate ketol-isomerase from Agrobacterium fabrum (strain C58 / ATCC 33970) (Agrobacterium tumefaciens (strain C58)).